We begin with the raw amino-acid sequence, 181 residues long: Ribulose bisphosphate carboxylase small subunit 3B, chloroplastic (181 aa).

Residues 1–54 constitute a chloroplast transit peptide; the sequence is MASSMLSSAAVVTSPAQATMVAPFTGLKSSAAFPVTRKTNKDITSIASNGGRVS.

It belongs to the RuBisCO small chain family. Heterohexadecamer of 8 large and 8 small subunits.

The protein resides in the plastid. Its subcellular location is the chloroplast. In terms of biological role, ruBisCO catalyzes two reactions: the carboxylation of D-ribulose 1,5-bisphosphate, the primary event in carbon dioxide fixation, as well as the oxidative fragmentation of the pentose substrate. Both reactions occur simultaneously and in competition at the same active site. Although the small subunit is not catalytic it is essential for maximal activity. The protein is Ribulose bisphosphate carboxylase small subunit 3B, chloroplastic (RBCS-3B) of Arabidopsis thaliana (Mouse-ear cress).